We begin with the raw amino-acid sequence, 84 residues long: uncharacterized protein (84 aa).

2 consecutive transmembrane segments (helical) span residues 27-47 (INHHTWHIVGLFAIGLLLAML) and 52-72 (IGHVENWYLIGFAALVFFVLI).

It to M.tuberculosis Rv2876.

Its subcellular location is the cell membrane. This is an uncharacterized protein from Mycobacterium leprae (strain TN).